Here is an 898-residue protein sequence, read N- to C-terminus: MSNVGDKFELSRDEFRNITQCLGNEEFRKLFAEYCQELKDPENRKQYEEELKLMEAERGYDVKFIKPLPGYVIKTVVDGKTKAFVNVCHCDLVGKPSSQCSTNKRGEKGLKWSIPYAQSQPRKDYDNKNVDCVVYDVVFHYDTLHLTKSNKNFRKLVTDTALDAVEGAFHVSLDRVNLKFPKLQYKGVAKMTVIRQKLKNFETRRKDGLIDTLYRASEQSKITHDNSADKENVNKQTFKSASQLEYTTPAYKLIHRKEVEYHELTGELDAKLDAAIPKELVLVIELPLLKSANQCTLNVTSSEVHLISDSPAKYKLEVKLPYTVLEKNGSAKFNTDETTLTVLLPVARNRRTLNDVTVSSNDQSMPDEMDQKPVERVKPLKEPQLVHSNANKKIIFPKFSANKMDNIFAFTLNVRNVDPSSIELQKGTDTVSCRFTNIGNGFFPCYYIFFLRFPNANITEVQHEEWDNNIILQVVLDHGLIDCYYAGTNENDLVQYSIMEDITDKINKFGKEIEDDSLCIAVSKNAIKQERKSSHLSIEIKTKDEIESDEGIDSALEGELKTDQSMQEDENPDEINTRTVEDDTKVAKENVKKVDQETAHEGKKSKKNQRRKNKKRSLSESCCDHLKVTINNDNPKPESGNEANSFEGTGSSSEATSKQRKARSVSESCPARDNNGVESDSVDNLSALIQFNHKYKGILKRSSLQRSISECSSIDEHYYLGTSVDGSSVAESVDHTNGELSESCRKTVRFNDAIKTKLFRSNTSILGQKKKNAKKNESKRRALTRRLSEGESTDNEDKDHQTTNEAPGSVVQRDTEHDSGISLDSDAAHPIEINADTEVQNQHQNDSTKPIEINRKVEKKFIASKNNNCNVKAQFIKSKRNDSSDIEFKSDMIFDIEM.

Disordered stretches follow at residues 558–680 and 765–822; these read GELK…VESD and ILGQ…SGIS. Basic and acidic residues predominate over residues 575-602; sequence INTRTVEDDTKVAKENVKKVDQETAHEG. The span at 603-616 shows a compositional bias: basic residues; that stretch reads KKSKKNQRRKNKKR. Over residues 641-656 the composition is skewed to polar residues; the sequence is NEANSFEGTGSSSEAT.

It belongs to the PIH1 family. Kintoun subfamily.

It is found in the cytoplasm. In terms of biological role, required for cytoplasmic pre-assembly of axonemal dyneins, thereby playing a central role in motility in cilia and flagella. Involved in pre-assembly of dynein arm complexes in the cytoplasm before intraflagellar transport loads them for the ciliary compartment. In Aedes aegypti (Yellowfever mosquito), this protein is Protein kintoun.